The following is a 534-amino-acid chain: Cytochrome P450 monooxygenase btcB (534 aa).

Asn20 carries an N-linked (GlcNAc...) asparagine glycan. A helical transmembrane segment spans residues 41-61 (ALAFLCGALLFGFVYSVFYNL). 3 N-linked (GlcNAc...) asparagine glycosylation sites follow: Asn335, Asn413, and Asn431. Cys484 contributes to the heme binding site.

Belongs to the cytochrome P450 family. It depends on heme as a cofactor.

The protein localises to the membrane. The protein operates within secondary metabolite biosynthesis; terpenoid biosynthesis. Its function is as follows. Cytochrome P4590 monooxygenase part of the gene cluster that mediates the biosynthesis of betaestacins. The bifunctional terpene synthase btcA converts isopentenyl diphosphate (IPP) and dimethylallyl diphosphate (DMAPP) into the sesterterpene betaestacin I. The C-terminal prenyltransferase (PT) domain of btcA catalyzes formation of GFPP, whereas the N-terminal terpene cyclase (TC) domain catalyzes the cyclization of GFPP into betaestacin I. The cytochrome P450 monooxygenase btcB oxidizes the C25 methyl group of betaestacin I to yield the carboxylic acid betaestacin IV via the alcohol betaestacin III. The cytochrome P450 monooxygenase btcC further catalyzes the multistep oxidation of betaestacin IV to produce several compounds, including betaestacins Va, Vb, Vc and VI. The polypeptide is Cytochrome P450 monooxygenase btcB (Colletotrichum orbiculare (strain 104-T / ATCC 96160 / CBS 514.97 / LARS 414 / MAFF 240422) (Cucumber anthracnose fungus)).